We begin with the raw amino-acid sequence, 555 residues long: Steroid-22-oyl-CoA synthetase (555 aa).

This sequence belongs to the ATP-dependent AMP-binding enzyme family.

The enzyme catalyses 3-oxochol-4-en-22-oate + ATP + CoA = 3-oxochol-4-en-22-oyl-CoA + AMP + diphosphate. The catalysed reaction is 3-hydroxy-9-oxo-9,10-seco-chola-1,3,5-trien-22-oate + ATP + CoA = 3-hydroxy-9-oxo-9,10-seco-chola-1,3,5-trien-22-oyl-CoA + AMP + diphosphate. Its pathway is steroid metabolism. Involved in cholate catabolism. Catalyzes the ATP-dependent formation of CoA thioesters of steroids with isopropanoyl side chains, likely occurring as degradation intermediates. Can use 4-BNC, HSBNC and HIDP as substrate. In Rhodococcus jostii (strain RHA1), this protein is Steroid-22-oyl-CoA synthetase.